The primary structure comprises 796 residues: Cation/H(+) antiporter 6B (796 aa).

13 consecutive transmembrane segments (helical) span residues 54–74, 93–113, 131–151, 159–179, 194–213, 223–243, 259–279, 285–305, 310–330, 344–364, 382–402, 411–431, and 444–464; these read DFWE…FLLW, SMML…IPCL, IGAF…DVGI, SVVI…LLYS, YTVM…NMLL, FGQI…FLTV, LAFM…LWVI, GAPV…LSYL, FLFF…NGPP, EGIF…WSFL, FSFL…AALA, IILG…VLTA, and LLGV…HFLY.

The protein belongs to the monovalent cation:proton antiporter 2 (CPA2) transporter (TC 2.A.37) family. CHX (TC 2.A.37.4) subfamily. As to expression, preferentially expressed in pollen.

Its subcellular location is the membrane. Functionally, may operate as a cation/H(+) antiporter. This is Cation/H(+) antiporter 6B (CHX6b) from Arabidopsis thaliana (Mouse-ear cress).